The chain runs to 116 residues: M-zodatoxin-Lt6a/b (116 aa).

The N-terminal stretch at 1–22 (MKYFVVALTLAVAFVCIEECKT) is a signal peptide. 2 propeptides span residues 23 to 44 (VEIG…EEAR) and 80 to 83 (EEAR). 2 short sequence motifs (processing quadruplet motif) span residues 41 to 44 (EEAR) and 80 to 83 (EEAR). A Pyrrolidone carboxylic acid modification is found at glutamine 84.

It belongs to the cationic peptide 03 (latarcin) family. 06 subfamily. Cleavage of the propeptide depends on the processing quadruplet motif (XXXR, with at least one of X being E). As to expression, expressed by the venom gland.

It is found in the secreted. Does not have antimicrobial activity against neither Gram-positive bacteria (A.globiformis VKM Ac-1112 (MIC&gt;70 uM), and B.subtilis VKM B-501 (MIC&gt;70 uM)), nor Gram-negative bacteria (E.coli DH5-alpha (MIC&gt;70 uM), E.coli MH1 (MIC&gt;70 uM), and P.aeruginosa PAO1 (MIC&gt;70 uM)), nor yeasts (P.pastoris GS115 (MIC&gt;70 uM), and S.cerevisiae Y190 (MIC&gt;70 uM)). Does not have hemolytic activity against rabbit erythrocytes. However, it causes some conductance changes in planar bilayer membranes, without membrane rupture, suggesting a cytolytic function on other biological targets. It causes paralysis, but is not lethal when injected into insect (M.domestica) larvae. The polypeptide is M-zodatoxin-Lt6a/b (Lachesana tarabaevi (Spider)).